The following is a 182-amino-acid chain: Large ribosomal subunit protein bL25 (182 aa).

The protein belongs to the bacterial ribosomal protein bL25 family. CTC subfamily. As to quaternary structure, part of the 50S ribosomal subunit; part of the 5S rRNA/L5/L18/L25 subcomplex. Contacts the 5S rRNA. Binds to the 5S rRNA independently of L5 and L18.

This is one of the proteins that binds to the 5S RNA in the ribosome where it forms part of the central protuberance. This Borrelia turicatae (strain 91E135) protein is Large ribosomal subunit protein bL25.